Consider the following 590-residue polypeptide: Beta-glucosidase 29 (590 aa).

Residues 1–21 form the signal peptide; the sequence is MNVQIFILLLIISWLTPKITS. Residues Gln-48, His-151, and 196–197 contribute to the a beta-D-glucoside site; that span reads NE. Residue Glu-197 is the Proton donor of the active site. Cys-216 and Cys-224 form a disulfide bridge. 2 N-linked (GlcNAc...) asparagine glycosylation sites follow: Asn-255 and Asn-331. Tyr-341 lines the a beta-D-glucoside pocket. A glycan (N-linked (GlcNAc...) asparagine) is linked at Asn-371. A beta-D-glucoside contacts are provided by residues Glu-413, Trp-463, 470–471, and Phe-479; that span reads EW. Residue Glu-413 is the Nucleophile of the active site. Asn-522 and Asn-553 each carry an N-linked (GlcNAc...) asparagine glycan.

Belongs to the glycosyl hydrolase 1 family.

The catalysed reaction is Hydrolysis of terminal, non-reducing beta-D-glucosyl residues with release of beta-D-glucose.. The polypeptide is Beta-glucosidase 29 (Arabidopsis thaliana (Mouse-ear cress)).